Reading from the N-terminus, the 511-residue chain is ATP synthase subunit alpha, plastid (511 aa).

Position 170 to 177 (170 to 177) interacts with ATP; it reads GDRQTGKT.

The protein belongs to the ATPase alpha/beta chains family. In terms of assembly, F-type ATPases have 2 components, CF(1) - the catalytic core - and CF(0) - the membrane proton channel. CF(1) has five subunits: alpha(3), beta(3), gamma(1), delta(1), epsilon(1). CF(0) has four main subunits: a, b, b' and c.

It is found in the plastid membrane. It catalyses the reaction ATP + H2O + 4 H(+)(in) = ADP + phosphate + 5 H(+)(out). In terms of biological role, produces ATP from ADP in the presence of a proton gradient across the membrane. The alpha chain is a regulatory subunit. The chain is ATP synthase subunit alpha, plastid from Cuscuta reflexa (Southern Asian dodder).